A 173-amino-acid polypeptide reads, in one-letter code: Large ribosomal subunit protein uL10 (173 aa).

The protein belongs to the universal ribosomal protein uL10 family. As to quaternary structure, part of the ribosomal stalk of the 50S ribosomal subunit. The N-terminus interacts with L11 and the large rRNA to form the base of the stalk. The C-terminus forms an elongated spine to which L12 dimers bind in a sequential fashion forming a multimeric L10(L12)X complex.

In terms of biological role, forms part of the ribosomal stalk, playing a central role in the interaction of the ribosome with GTP-bound translation factors. The chain is Large ribosomal subunit protein uL10 from Maridesulfovibrio salexigens (strain ATCC 14822 / DSM 2638 / NCIMB 8403 / VKM B-1763) (Desulfovibrio salexigens).